Here is a 1356-residue protein sequence, read N- to C-terminus: Partitioning defective 3 homolog (1356 aa).

Position 25 is a phosphoserine (Ser-25). Disordered stretches follow at residues 81-100 and 154-262; these read EQDPHHGGDGTSASSTGTQS and SVSD…GLEH. Thr-91 bears the Phosphothreonine mark. Residues 91–100 are compositionally biased toward low complexity; it reads TSASSTGTQS. 2 stretches are compositionally biased toward polar residues: residues 154–163 and 171–187; these read SVSDSNFSSE and TRWSTTAGFLKQNTAGS. A phosphoserine mark is found at Ser-156 and Ser-174. The span at 190–203 shows a compositional bias: basic and acidic residues; the sequence is TCDRKKDENYRSLP. Residues 204–224 show a composition bias toward polar residues; sequence RDTSNWSNQFQRDNARSSLSA. Residues 246-260 show a composition bias toward basic and acidic residues; it reads DNSRVEPVGHADTGL. A PDZ 1 domain is found at 271–359; sequence MVKLVEVPND…TPIIWFHVVP (89 aa). The residue at position 383 (Ser-383) is a Phosphoserine. Residues 408 to 448 are disordered; the sequence is LNHPPEQIDSHSRLPHSAHPSGKPPSAPASAPQNVFSTTVS. PDZ domains are found at residues 461–546 and 590–677; these read NIQL…LVFR and EVPL…GMIQ. Tyr-489 bears the Phosphotyrosine mark. Ser-692, Ser-695, Ser-715, Ser-728, Ala-792, Ser-809, and Ser-827 each carry phosphoserine. Residues 712–936 are interaction with PRKCI and PRKCZ; sequence RRISHSLYSG…AAIDKSYDKP (225 aa). Lys-834 bears the N6-acetyllysine mark. Ser-837 bears the Phosphoserine mark. At Lys-851 the chain carries N6-acetyllysine. Phosphoserine occurs at positions 852 and 873. Disordered regions lie at residues 865-886 and 932-1025; these read TVDDQKAGSPSRDVGPSLGLKK and SYDK…DMFR. Lys-885 bears the N6-acetyllysine mark. An interaction with FRMD4A region spans residues 935–1356; that stretch reads KPAVDDDDEG…TPEKGRPFYS (422 aa). The segment covering 939–953 has biased composition (acidic residues); that stretch reads DDDDEGMETLEEDTE. Ser-962 bears the Phosphoserine; by AURKA mark. The span at 968–982 shows a compositional bias: polar residues; the sequence is DQPSHSLERQMNGNQ. 2 positions are modified to phosphoserine: Ser-971 and Ser-973. A compositionally biased stretch (basic and acidic residues) spans 983-1009; that stretch reads EKGDKTDRKKDKTGKEKKKDRDKEKDK. Ser-1046 is modified (phosphoserine). Residues 1049 to 1077 adopt a coiled-coil conformation; the sequence is SEEERIRMKQEQERIQAKTREFRERQARE. Positions 1129–1356 are disordered; the sequence is QVKKPRNSKP…TPEKGRPFYS (228 aa). Polar residues predominate over residues 1136–1149; the sequence is SKPSPVDSNRSTPS. Over residues 1150–1177 the composition is skewed to basic and acidic residues; sequence NHDRIQRLRQEFQQAKQDEDVEDRRRTY. 3 coiled-coil regions span residues 1151–1174, 1201–1224, and 1280–1301; these read HDRIQRLRQEFQQAKQDEDVEDRR, VQMQRQRQEERESSQQAQRQYSSL, and MLETQELLRQEQRRKEQQMKKQ. Positions 1196–1205 are enriched in low complexity; sequence SVSVEVQMQR. The span at 1221-1245 shows a compositional bias: polar residues; the sequence is YSSLPRQSRKNASSVSQDSWEQNYS. The span at 1285-1298 shows a compositional bias: basic and acidic residues; that stretch reads ELLRQEQRRKEQQM. Residues 1337-1346 are compositionally biased toward polar residues; that stretch reads SQVARLNRLQ. A compositionally biased stretch (basic and acidic residues) spans 1347–1356; sequence TPEKGRPFYS. Lys-1350 is modified (N6-acetyllysine).

It belongs to the PAR3 family. In terms of assembly, interacts (via PDZ 1 domain) with F11R/JAM1, PARD6A and PARD6B. Interacts with PRCKI and CDH5. Interacts (via PDZ 3 domain) with PTEN (via C-terminus). Part of a complex with PARD6A or PARD6B, PRKCI or PRKCZ and CDC42 or RAC1. Component of a complex whose core is composed of ARHGAP17, AMOT, PALS1, PATJ and PARD3/PAR3. Interacts with LIMK2, AURKA and AURKB. Component of the Par polarity complex, composed of at least phosphorylated PRKCZ, PARD3 and TIAM1. Directly interacts with TIAM1 and TIAM2. Interacts with ECT2, FBF1 and SIRT2. Interacts (via coiled-coil domain) with FRMD4A. Found in a complex with PARD3, CYTH1 and FRMD4A. Interacts with SAPCD2. Interacts with PRKCA. Interacts with PRKCZ. In terms of processing, acetylated. Deacetylated by SIRT2, thereby inhibiting Schwann cell peripheral myelination. Phosphorylation at Ser-827 by PRKCZ and PRKCI occurs at the most apical tip of epithelial cell-cell contacts during the initial phase of tight junction formation and may promote dissociation of the complex with PARD6. EGF-induced Tyr-1127 phosphorylation mediates dissociation from LIMK2. Phosphorylation by AURKA at Ser-962 is required for the normal establishment of neuronal polarity. Widely expressed.

It is found in the cytoplasm. The protein localises to the endomembrane system. Its subcellular location is the cell junction. The protein resides in the tight junction. It localises to the adherens junction. It is found in the cell membrane. The protein localises to the cell cortex. Its subcellular location is the cytoskeleton. In terms of biological role, adapter protein involved in asymmetrical cell division and cell polarization processes. Seems to play a central role in the formation of epithelial tight junctions. Targets the phosphatase PTEN to cell junctions. Involved in Schwann cell peripheral myelination. Association with PARD6B may prevent the interaction of PARD3 with F11R/JAM1, thereby preventing tight junction assembly. The PARD6-PARD3 complex links GTP-bound Rho small GTPases to atypical protein kinase C proteins. Required for establishment of neuronal polarity and normal axon formation in cultured hippocampal neurons. The polypeptide is Partitioning defective 3 homolog (Homo sapiens (Human)).